A 296-amino-acid polypeptide reads, in one-letter code: Mycothiol acetyltransferase (296 aa).

2 consecutive N-acetyltransferase domains span residues 1–148 (MTEW…IRVD) and 151–296 (VTVR…YGRA). Glu-34 is a 1D-myo-inositol 2-(L-cysteinylamino)-2-deoxy-alpha-D-glucopyranoside binding site. Acetyl-CoA is bound by residues 79 to 81 (LVV) and 87 to 92 (RRGIGS). Positions 178, 219, and 229 each coordinate 1D-myo-inositol 2-(L-cysteinylamino)-2-deoxy-alpha-D-glucopyranoside. Residues 233 to 235 (VGV) and 240 to 246 (QGRGLGH) contribute to the acetyl-CoA site. Residue Tyr-267 participates in 1D-myo-inositol 2-(L-cysteinylamino)-2-deoxy-alpha-D-glucopyranoside binding. 272-277 (NQAALR) contributes to the acetyl-CoA binding site.

The protein belongs to the acetyltransferase family. MshD subfamily. In terms of assembly, monomer.

The enzyme catalyses 1D-myo-inositol 2-(L-cysteinylamino)-2-deoxy-alpha-D-glucopyranoside + acetyl-CoA = mycothiol + CoA + H(+). Its function is as follows. Catalyzes the transfer of acetyl from acetyl-CoA to desacetylmycothiol (Cys-GlcN-Ins) to form mycothiol. The sequence is that of Mycothiol acetyltransferase from Mycobacteroides abscessus (strain ATCC 19977 / DSM 44196 / CCUG 20993 / CIP 104536 / JCM 13569 / NCTC 13031 / TMC 1543 / L948) (Mycobacterium abscessus).